A 158-amino-acid polypeptide reads, in one-letter code: MAKALITYASMSGNTEDIAFIIKDTLQEYELDIDCVEINDMDASCLTSYDYVLIGTYTWGDGDLPYEAEDFFEEVKQIQLNGLKTACFGSGDYSYPKFCEAVNLFNVMLQEAGAAVYQETLKIELAPETDEDVESCRAFARGFLAWADYMNKEKIHVS.

Residues 4–144 (ALITYASMSG…SCRAFARGFL (141 aa)) enclose the Flavodoxin-like domain.

Belongs to the flavodoxin family. FMN is required as a cofactor.

Its function is as follows. Low-potential electron donor to a number of redox enzymes. The chain is Probable flavodoxin 1 (ykuN) from Bacillus subtilis (strain 168).